We begin with the raw amino-acid sequence, 305 residues long: Mat- sexual cell fertilization-promoting factor (305 aa).

A DNA-binding region (alpha box) is located at residues 38 to 93 (PAKKKVNGFMGYRSYYSSMFSQLPQKERSPILTTLWQQDPFHKEWDFMCAVYSAIR).

It belongs to the MATALPHA1 family.

The protein localises to the nucleus. Its function is as follows. Controls fertilization, probably by determining the mating type. May be involved in the post-fertilization steps of the sexual cycle besides mat+. It is required for the developmental events that occur in the female organ after fertilization. The protein is Mat- sexual cell fertilization-promoting factor (FMR1) of Podospora anserina (Pleurage anserina).